An 835-amino-acid chain; its full sequence is Probable alpha-glucuronidase A (835 aa).

Residues 1–18 form the signal peptide; it reads MRWSFLTVLLWLVSLTGA. N-linked (GlcNAc...) asparagine glycans are attached at residues N49, N101, N148, N221, N278, N309, N342, N460, N522, N571, N677, and N727.

The protein belongs to the glycosyl hydrolase 67 family.

The protein localises to the secreted. The enzyme catalyses an alpha-D-glucuronoside + H2O = D-glucuronate + an alcohol. Its function is as follows. Alpha-glucuronidase involved in the hydrolysis of xylan, a major structural heterogeneous polysaccharide found in plant biomass representing the second most abundant polysaccharide in the biosphere, after cellulose. Releases 4-O-methylglucuronic acid from xylan. The protein is Probable alpha-glucuronidase A (aguA) of Aspergillus oryzae (strain ATCC 42149 / RIB 40) (Yellow koji mold).